A 321-amino-acid polypeptide reads, in one-letter code: MRTVKVFEEAWPLHTPFVIARGSRSEARVVVVELEEEGIKGTGECTPYPRYGESDASVMAQIMSVVPQLEKGLTREELQKILPAGAARNALDCALWDLAARRQQQSLADLIGITLPETVITAQTVVIGTPDQMANSASTLWQAGAKLLKVKLDNHLISERMVAIRTAVPDATLIVDANESWRAEGLAARCQLLADLGVAMLEQPLPAQDDAALENFIHPLPICADESCHTRSNLKALKGRYEMVNIKLDKTGGLTEALALATEARAQGFSLMLGCMLCTSRAISAALPLVPQVSFADLDGPTWLAVDVEPALQFTTGELHL.

Substrate-binding residues include threonine 124 and lysine 149. Lysine 151 functions as the Proton acceptor; specific for (R)-substrate epimerization in the catalytic mechanism. Mg(2+) contacts are provided by aspartate 176, glutamate 202, and aspartate 225. The Proton acceptor; specific for (S)-substrate epimerization role is filled by lysine 247. Positions 275, 297, and 299 each coordinate substrate.

It belongs to the mandelate racemase/muconate lactonizing enzyme family. Monomer. The cofactor is Mg(2+).

The enzyme catalyses L-alanyl-L-glutamate = L-alanyl-D-glutamate. It functions in the pathway cell wall biogenesis; peptidoglycan recycling. In terms of biological role, catalyzes the epimerization of L-Ala-D-Glu to L-Ala-L-Glu and has a role in the recycling of the murein peptide, of which L-Ala-D-Glu is a component. Is also able to catalyze the reverse reaction and the epimerization of all the L-Ala-X dipeptides, except L-Ala-L-Arg, L-Ala-L-Lys and L-Ala-L-Pro. Is also active with L-Gly-L-Glu, L-Phe-L-Glu, and L-Ser-L-Glu, but not with L-Glu-L-Glu, L-Lys-L-Glu, L-Pro-L-Glu, L-Lys-L-Ala, or D-Ala-D-Ala. The polypeptide is L-Ala-D/L-Glu epimerase (ycjG) (Escherichia coli (strain K12)).